The following is a 309-amino-acid chain: Calcium homeostasis modulator protein 5 (309 aa).

Over 1-15 the chain is Cytoplasmic; the sequence is MDAFQSILKFFLNQK. A helical membrane pass occupies residues 16 to 37; sequence TAIGYSFMALLTVGSERLFSLV. A 1,2-diacyl-sn-glycero-3-phosphate is bound by residues Arg-32 and Val-37. Over 38–45 the chain is Extracellular; it reads AFKCPCSI. Cystine bridges form between Cys-41-Cys-127, Cys-43-Cys-158, and Cys-142-Cys-149. Residues 46 to 70 traverse the membrane as a helical segment; it reads ENTAYGLVFLFAPAWVLLILGFFLN. Over 71–99 the chain is Cytoplasmic; that stretch reads NKAWRLFTGCCMNPQKIFPRRRCCRFFYV. The chain crosses the membrane as a helical span at residues 100–129; sequence LGHITLSSLVAPVMWLSVALLNGTFYECAM. Asn-121 provides a ligand contact to a 1,2-diacyl-sn-glycero-3-phosphate. Topologically, residues 130–174 are extracellular; that stretch reads SGTRSTRLLEMICKGKPKECWEELHKVSCGKSSMAAMDSEEVRLS. Residues 175 to 200 traverse the membrane as a helical segment; sequence LQAQSQILGWCLICSASFFSLLTTCY. The Cytoplasmic segment spans residues 201-309; that stretch reads ARCRSKVSYL…MILVGTAQSL (109 aa). Arg-202 lines the a 1,2-diacyl-sn-glycero-3-phosphate pocket.

Belongs to the CALHM family. Oligomerizes to form undecameric cone-shaped channels.

It localises to the membrane. Its function is as follows. May assemble to form large pore channels with gating and ion conductance likely regulated by membrane lipids. This chain is Calcium homeostasis modulator protein 5, found in Rattus norvegicus (Rat).